Reading from the N-terminus, the 225-residue chain is DnaA regulatory inactivator Hda (225 aa).

It belongs to the DnaA family. HdA subfamily. The active form seems to be an ADP-bound monomer. Forms the RIDA complex (regulatory inactivation of DnaA) of ATP-DnaA, ADP-Hda and the DNA-loaded beta sliding clamp (dnaN).

Mediates the interaction of DNA replication initiator protein DnaA with DNA polymerase subunit beta sliding clamp (dnaN). Stimulates hydrolysis of ATP-DnaA to ADP-DnaA, rendering DnaA inactive for reinitiation, a process called regulatory inhibition of DnaA or RIDA. In Klebsiella pneumoniae (strain 342), this protein is DnaA regulatory inactivator Hda.